We begin with the raw amino-acid sequence, 215 residues long: Protein N-lysine methyltransferase METTL21A (215 aa).

Residues tryptophan 47, 73–75 (GAG), aspartate 94, tryptophan 125, and alanine 141 contribute to the S-adenosyl-L-methionine site.

This sequence belongs to the methyltransferase superfamily. METTL21 family.

It is found in the cytoplasm. It carries out the reaction L-lysyl-[protein] + 3 S-adenosyl-L-methionine = N(6),N(6),N(6)-trimethyl-L-lysyl-[protein] + 3 S-adenosyl-L-homocysteine + 3 H(+). In terms of biological role, protein-lysine methyltransferase that selectively trimethylates residues in heat shock protein 70 (HSP70) family members. This chain is Protein N-lysine methyltransferase METTL21A (mettl21a), found in Xenopus tropicalis (Western clawed frog).